We begin with the raw amino-acid sequence, 101 residues long: Integration host factor subunit beta (101 aa).

The protein belongs to the bacterial histone-like protein family. In terms of assembly, heterodimer of an alpha and a beta chain.

Its function is as follows. This protein is one of the two subunits of integration host factor, a specific DNA-binding protein that functions in genetic recombination as well as in transcriptional and translational control. This Nitrobacter hamburgensis (strain DSM 10229 / NCIMB 13809 / X14) protein is Integration host factor subunit beta.